The primary structure comprises 229 residues: MTNKIRAIFDRIAPVYDQLNDWLSLGQHRIWKEMAIKWTGAKPGDTCLDLCCGSGDLALRLARRVGSTGQVSGVDFSANLLETAKQRAQSQYPQPNISWVEANVLDLPFKDNQFDAATMGYGLRNVTDIPRSLQELHRVLKPNAKAAILDFHRPNNQQFRTFQQWYLDSIVVPLADRLGVKEEYAYISPSLDRFPIGKEQVEIALKVGFTSATHYPIANGMMGVLIISK.

It belongs to the class I-like SAM-binding methyltransferase superfamily. MenG/UbiE family.

The catalysed reaction is demethylphylloquinol + S-adenosyl-L-methionine = phylloquinol + S-adenosyl-L-homocysteine + H(+). The protein operates within cofactor biosynthesis; phylloquinone biosynthesis. Its function is as follows. Methyltransferase required for the conversion of 2-phytyl-1,4-beta-naphthoquinol to phylloquinol. In Nostoc sp. (strain PCC 7120 / SAG 25.82 / UTEX 2576), this protein is 2-phytyl-1,4-naphtoquinone methyltransferase.